A 616-amino-acid polypeptide reads, in one-letter code: MSDLNQSKKMNVSEFADAQRSHYTVYPSLPQSNKNDKHIPFVKLLSGKESEVNVEKRWELYHQLHSHFHDQVDHIIDNIEADLKAEISDLLYSETTQKRRCFNTIFLLGSDSTTKIELKDESSRYNVLIELTPKESPNVRMMLRRSMYKLYSAADAEEHPTIKYEDINDEDGDFTEQNNDVSYDLSLVENFKRLFGKDLAMVFNFKDVDSINFNTLDNFIILLKSAFKYDHVKISLIFNINTNLSNIEKNLRQSTIRLLKRNYHKLDVSSNKGFKYGNQIFQSFLDTVDGKLNLSDRFVEFILSKMANNTNHNLQLLTKMLDYSLMSYFFQNAFSVFIDPVNVDFLNDDYLKILSRCPTFMFFVEGLIKQHAPADEILSLLTNKNRGLEEFFVEFLVRENPINGHAKFVARFLEEELNITNFNLIELYHNLLIGKLDSYLDRWSACKEYKDRLHFEPIDTIFQELFTLDNRSGLLTQSIFPSYKSNIEDNLLSWEQVLPSLDKENYDTLSGDLDKIMAPVLGQLFKLYREANMTINIYDFYIAFRETLPKEEILNFIRKDPSNTKLLELAETPDAFDKVALILFMQAIFAFENMGLIKFQSTKSYDLVEKCVWRGI.

Residue Ser2 is modified to N-acetylserine.

Belongs to the ORC3 family. In terms of assembly, component of the origin recognition complex (ORC) composed of at least ORC1, ORC2, ORC3, ORC4, ORC5 and ORC6. Interacts with ORC6.

The protein resides in the nucleus. In terms of biological role, component of the origin recognition complex (ORC) that binds origins of replication. It has a role in both chromosomal replication and mating type transcriptional silencing. Binds to the ARS consensus sequence (ACS) of origins of replication. The sequence is that of Origin recognition complex subunit 3 (ORC3) from Saccharomyces cerevisiae (strain ATCC 204508 / S288c) (Baker's yeast).